The sequence spans 302 residues: Homoserine O-acetyltransferase (302 aa).

Cysteine 142 functions as the Acyl-thioester intermediate in the catalytic mechanism. Substrate is bound by residues lysine 163 and serine 192. The active-site Proton acceptor is the histidine 235. Glutamate 237 is a catalytic residue. Arginine 249 contributes to the substrate binding site.

This sequence belongs to the MetA family.

It localises to the cytoplasm. The enzyme catalyses L-homoserine + acetyl-CoA = O-acetyl-L-homoserine + CoA. It functions in the pathway amino-acid biosynthesis; L-methionine biosynthesis via de novo pathway; O-acetyl-L-homoserine from L-homoserine: step 1/1. Functionally, transfers an acetyl group from acetyl-CoA to L-homoserine, forming acetyl-L-homoserine. The sequence is that of Homoserine O-acetyltransferase from Geobacillus sp. (strain WCH70).